We begin with the raw amino-acid sequence, 382 residues long: tRNA (guanine(26)-N(2))-dimethyltransferase (382 aa).

The 367-residue stretch at 4–370 folds into the Trm1 methyltransferase domain; sequence TEVIEGKARL…REFSEILECV (367 aa). S-adenosyl-L-methionine-binding residues include Arg44, Arg69, Asp87, Asp113, and Ala114. Zn(2+)-binding residues include Cys244, Cys247, Cys261, and Cys264.

It belongs to the class I-like SAM-binding methyltransferase superfamily. Trm1 family.

It carries out the reaction guanosine(26) in tRNA + 2 S-adenosyl-L-methionine = N(2)-dimethylguanosine(26) in tRNA + 2 S-adenosyl-L-homocysteine + 2 H(+). In terms of biological role, dimethylates a single guanine residue at position 26 of a number of tRNAs using S-adenosyl-L-methionine as donor of the methyl groups. This Metallosphaera sedula (strain ATCC 51363 / DSM 5348 / JCM 9185 / NBRC 15509 / TH2) protein is tRNA (guanine(26)-N(2))-dimethyltransferase.